Consider the following 365-residue polypeptide: MNAKEFLIELLKFKSVTPNDDGALNFIAMELSDFEAFFIEKEGIKNLLLTKKFNDEGEHLAFGGHVDVVPAGEGWKNDPFEPLEEEGFIYARGAQDMKSGVAAFIDAVKDVSFKGRRLSLILTSDEEGEAKYGTKAVLEWMKEKNMLPDYAVVAEPTCVKKMGDSIKIGRRGSINGKLLIRGKQGHVAYPEKCINPVHDFAPVLKLLAGFDLDPGSAEFSPSKIVITDIRGGMGVCNVTPNDLKLMFNVRNSPDTSLEDVKSYVEKICHGLNYELELKQSSEAFLTNIDNKIVQKMNESVQKITHEVPELNTKGGTSDARYFAKYGVKVVEFGVCNDRIHAIDERVSIEEFEKLCLVFKDLIENF.

Residue histidine 65 coordinates Zn(2+). The active site involves aspartate 67. Aspartate 96 provides a ligand contact to Zn(2+). The Proton acceptor role is filled by glutamate 126. Residues glutamate 127, glutamate 155, and histidine 340 each coordinate Zn(2+).

Belongs to the peptidase M20A family. DapE subfamily. In terms of assembly, homodimer. The cofactor is Zn(2+). Co(2+) is required as a cofactor.

The enzyme catalyses N-succinyl-(2S,6S)-2,6-diaminopimelate + H2O = (2S,6S)-2,6-diaminopimelate + succinate. Its pathway is amino-acid biosynthesis; L-lysine biosynthesis via DAP pathway; LL-2,6-diaminopimelate from (S)-tetrahydrodipicolinate (succinylase route): step 3/3. Catalyzes the hydrolysis of N-succinyl-L,L-diaminopimelic acid (SDAP), forming succinate and LL-2,6-diaminopimelate (DAP), an intermediate involved in the bacterial biosynthesis of lysine and meso-diaminopimelic acid, an essential component of bacterial cell walls. This is Succinyl-diaminopimelate desuccinylase from Campylobacter jejuni subsp. jejuni serotype O:6 (strain 81116 / NCTC 11828).